We begin with the raw amino-acid sequence, 512 residues long: Altronate oxidoreductase (512 aa).

26–37 lines the NAD(+) pocket; it reads VLQFGEGNFLRG.

Belongs to the mannitol dehydrogenase family. UxaB subfamily.

It catalyses the reaction D-altronate + NAD(+) = keto-D-tagaturonate + NADH + H(+). It functions in the pathway carbohydrate metabolism; pentose and glucuronate interconversion. The chain is Altronate oxidoreductase from Halalkalibacterium halodurans (strain ATCC BAA-125 / DSM 18197 / FERM 7344 / JCM 9153 / C-125) (Bacillus halodurans).